Reading from the N-terminus, the 282-residue chain is MIEQRPVSNLIGHLILILGIIIVAFPIYYTFVASSMTSTQIIRPPISLLPGDHLVENYREAIFGGVERVVGVSLERLLWNSFVVAMAIAVGKIIISFMSAFAIVFFRFPMRMFFFWMIFITLMLPVEVRILPTYKVIVDLGMIDTYAGLTLPLMASATATFLFRQFFLTIPGELVEAARIDNAGPFRFMRDILLPLSKTNIAALFVILFIYGWTQYLWPLLVTNDAKMNTIIIGLRRMVDWADASTPWNYVMVTAILAIIPPILVVVLMQRWFVKGLVETEK.

6 consecutive transmembrane segments (helical) span residues 14–34, 86–106, 112–132, 146–168, 201–221, and 248–268; these read LILI…FVAS, MAIA…IVFF, MFFF…RILP, YAGL…QFFL, IAAL…WPLL, and WNYV…VVVL. Positions 78–269 constitute an ABC transmembrane type-1 domain; the sequence is LWNSFVVAMA…IPPILVVVLM (192 aa).

Belongs to the binding-protein-dependent transport system permease family. In terms of assembly, the complex is composed of two ATP-binding proteins (UgpC), two transmembrane proteins (UgpA and UgpE) and a solute-binding protein (UgpB).

The protein localises to the cell inner membrane. Functionally, part of the ABC transporter complex UgpBAEC involved in sn-glycerol-3-phosphate (G3P) import. Probably responsible for the translocation of the substrate across the membrane. The sequence is that of sn-glycerol-3-phosphate transport system permease protein UgpE (ugpE) from Brucella melitensis biotype 1 (strain ATCC 23456 / CCUG 17765 / NCTC 10094 / 16M).